The primary structure comprises 377 residues: 6-oxocyclohex-1-ene-1-carbonyl-CoA hydrolase (377 aa).

It belongs to the enoyl-CoA hydratase/isomerase family. Homotetramer.

It catalyses the reaction 6-oxocyclohex-1-ene-1-carbonyl-CoA + 2 H2O = 3-hydroxy-6-carboxyhexanoyl-CoA + H(+). It participates in aromatic compound metabolism; benzoyl-CoA degradation. Involved in the central benzoyl-CoA catabolism. Catalyzes the addition of one molecule of water to the double bond and the hydrolytic cleavage of C-C bond in the alicyclic ring, 6-oxocyclohex-1-ene-1-carbonyl-CoA (6-OCH-CoA) to yield 3-hydroxypimelyl-CoA. This chain is 6-oxocyclohex-1-ene-1-carbonyl-CoA hydrolase (oah), found in Thauera aromatica.